The sequence spans 503 residues: Aspartyl/glutamyl-tRNA(Asn/Gln) amidotransferase subunit B (503 aa).

This sequence belongs to the GatB/GatE family. GatB subfamily. Heterotrimer of A, B and C subunits.

It catalyses the reaction L-glutamyl-tRNA(Gln) + L-glutamine + ATP + H2O = L-glutaminyl-tRNA(Gln) + L-glutamate + ADP + phosphate + H(+). It carries out the reaction L-aspartyl-tRNA(Asn) + L-glutamine + ATP + H2O = L-asparaginyl-tRNA(Asn) + L-glutamate + ADP + phosphate + 2 H(+). Allows the formation of correctly charged Asn-tRNA(Asn) or Gln-tRNA(Gln) through the transamidation of misacylated Asp-tRNA(Asn) or Glu-tRNA(Gln) in organisms which lack either or both of asparaginyl-tRNA or glutaminyl-tRNA synthetases. The reaction takes place in the presence of glutamine and ATP through an activated phospho-Asp-tRNA(Asn) or phospho-Glu-tRNA(Gln). This Nocardia farcinica (strain IFM 10152) protein is Aspartyl/glutamyl-tRNA(Asn/Gln) amidotransferase subunit B.